Consider the following 37-residue polypeptide: Cytochrome b6-f complex subunit 5 (37 aa).

Residues 5–25 traverse the membrane as a helical segment; it reads LLSGIVPGLIPITLAGSFVIA.

This sequence belongs to the PetG family. In terms of assembly, the 4 large subunits of the cytochrome b6-f complex are cytochrome b6, subunit IV (17 kDa polypeptide, PetD), cytochrome f and the Rieske protein, while the 4 small subunits are PetG, PetL, PetM and PetN. The complex functions as a dimer.

It localises to the plastid membrane. In terms of biological role, component of the cytochrome b6-f complex, which mediates electron transfer between photosystem II (PSII) and photosystem I (PSI), cyclic electron flow around PSI, and state transitions. PetG is required for either the stability or assembly of the cytochrome b6-f complex. This Aneura mirabilis (Parasitic liverwort) protein is Cytochrome b6-f complex subunit 5.